The chain runs to 606 residues: Ribonucleoprotein PTB-binding 1 (606 aa).

The tract at residues 1 to 41 (MAADVSVTHRPPLSPKSGAEVEAGDAAERRAPEEELPPLDP) is disordered. Ala2 bears the N-acetylalanine mark. Residues Ser6 and Ser14 each carry the phosphoserine modification. Residues 45–60 (RKRLEHTERQFRNRRK) carry the Nuclear localization signal motif. 3 RRM domains span residues 59 to 130 (RKIL…LQPT), 132 to 210 (ALLC…WTDA), and 221 to 299 (RCLC…FCAP). The segment at 307–395 (LAALIAAQAT…QTQGQKKPGI (89 aa)) is interaction with PTBP1. The tract at residues 391–474 (KKPGILGDSP…PPAPVGLRGS (84 aa)) is disordered. The segment covering 453–462 (LGLGPPAAQL) has biased composition (low complexity). Thr463 carries the phosphothreonine modification. Ser474 bears the Phosphoserine mark. Residue Pro488 is modified to Phosphothreonine. The segment at 519–564 (GLLGLSPGPNGHSHLLKVRAGGGDMQGWEAPAPQRPLTRPALPSVS) is disordered. Phosphoserine is present on residues Ser562 and His567. Residues 579-606 (CPRPSPAQKAAMWASTPRASAATTRTPT) are disordered. A compositionally biased stretch (low complexity) spans 592–606 (ASTPRASAATTRTPT).

In terms of assembly, interacts with PTBP1, RAVER2, VCL and ACTN1. Part of a complex containing RAVER1, VCL and ACTN1.

Its subcellular location is the nucleus. It localises to the cytoplasm. Cooperates with PTBP1 to modulate regulated alternative splicing events. Promotes exon skipping. Cooperates with PTBP1 to modulate switching between mutually exclusive exons during maturation of the TPM1 pre-mRNA. This is Ribonucleoprotein PTB-binding 1 (RAVER1) from Homo sapiens (Human).